The sequence spans 101 residues: Small ribosomal subunit protein bS18c (101 aa).

The protein belongs to the bacterial ribosomal protein bS18 family. Part of the 30S ribosomal subunit.

It localises to the plastid. Its subcellular location is the chloroplast. This Gossypium hirsutum (Upland cotton) protein is Small ribosomal subunit protein bS18c.